The primary structure comprises 29 residues: Kalata-B11 (29 aa).

Positions 1–29 (GLPVCGETCFGGTCNTPGCSCTDPICTRD) form a cross-link, cyclopeptide (Gly-Asp). 3 disulfides stabilise this stretch: cysteine 5–cysteine 19, cysteine 9–cysteine 21, and cysteine 14–cysteine 26.

Post-translationally, this is a cyclic peptide.

In terms of biological role, probably participates in a plant defense mechanism. The protein is Kalata-B11 of Oldenlandia affinis.